Here is a 235-residue protein sequence, read N- to C-terminus: Peptidase E (235 aa).

Catalysis depends on charge relay system residues Ser-122, Asp-137, and His-159.

Belongs to the peptidase S51 family.

It localises to the cytoplasm. The catalysed reaction is Dipeptidase E catalyzes the hydrolysis of dipeptides Asp-|-Xaa. It does not act on peptides with N-terminal Glu, Asn or Gln, nor does it cleave isoaspartyl peptides.. Hydrolyzes dipeptides containing N-terminal aspartate residues. May play a role in allowing the cell to use peptide aspartate to spare carbon otherwise required for the synthesis of the aspartate family of amino acids. The sequence is that of Peptidase E from Shewanella denitrificans (strain OS217 / ATCC BAA-1090 / DSM 15013).